The primary structure comprises 51 residues: Bacteriocin aureocin A53 (51 aa).

Met-1 bears the N-formylmethionine mark.

The protein localises to the secreted. Functionally, antibacterial peptide active against a broad range of lactic acid bacteria, L.monocytogenes and many epidemiologically unrelated strains of S.aureus involved in bovine mastitis. In Staphylococcus aureus, this protein is Bacteriocin aureocin A53 (aucA).